Reading from the N-terminus, the 411-residue chain is Putative nickel insertion protein (411 aa).

Belongs to the LarC family.

This chain is Putative nickel insertion protein, found in Acaryochloris marina (strain MBIC 11017).